The primary structure comprises 301 residues: Mitochondrial thiamine pyrophosphate carrier 1 (301 aa).

3 Solcar repeats span residues V15–S102, S115–L200, and R206–F293. 6 consecutive transmembrane segments (helical) span residues A20–L38, V79–I99, L121–L141, I172–W192, V207–F227, and I252–S272.

It belongs to the mitochondrial carrier (TC 2.A.29) family.

Its subcellular location is the mitochondrion inner membrane. Mitochondrial transporter that mediates uptake of thiamine pyrophosphate (ThPP) into mitochondria. In Candida albicans (strain SC5314 / ATCC MYA-2876) (Yeast), this protein is Mitochondrial thiamine pyrophosphate carrier 1 (TPC1).